The following is a 349-amino-acid chain: Histidinol-phosphate aminotransferase (349 aa).

Residues 1–22 are disordered; it reads MVSIRPSVRHTPAYVPGEQPQT. Lys207 bears the N6-(pyridoxal phosphate)lysine mark.

The protein belongs to the class-II pyridoxal-phosphate-dependent aminotransferase family. Histidinol-phosphate aminotransferase subfamily. In terms of assembly, homodimer. The cofactor is pyridoxal 5'-phosphate.

The enzyme catalyses L-histidinol phosphate + 2-oxoglutarate = 3-(imidazol-4-yl)-2-oxopropyl phosphate + L-glutamate. It functions in the pathway amino-acid biosynthesis; L-histidine biosynthesis; L-histidine from 5-phospho-alpha-D-ribose 1-diphosphate: step 7/9. The protein is Histidinol-phosphate aminotransferase (hisC) of Synechocystis sp. (strain ATCC 27184 / PCC 6803 / Kazusa).